The primary structure comprises 314 residues: MNVVKISPRGYCYGVVDAMVLARQAAQNLDLPRPIYILGMIVHNKHVTDAFEEEGIISLDGPNRLDILKQVDKGTVIFTAHGVSPQVRKLAKEKGLTVVDATCPDVTRTHDLIREKSQEGYKFIYVGKKGHPEPEGAIGVAPEFVHLVENVEDVESLDISADKIIITNQTTMSQWDVSEIMKKAMEKYPQAEVHNEICLATQVRQEAVAEQARECDLVIVVGDPKSNNSNRLAQVSEQIAGTKAYRIGDVTELQQEWFDGVETVGVTAGASTPTPITKEVIAFIEKYDPSKPETWTPERKVTLQKILPKVKIKK.

Cys12 is a [4Fe-4S] cluster binding site. (2E)-4-hydroxy-3-methylbut-2-enyl diphosphate is bound by residues His43 and His81. His43 and His81 together coordinate dimethylallyl diphosphate. Isopentenyl diphosphate is bound by residues His43 and His81. Cys103 contributes to the [4Fe-4S] cluster binding site. Residue His131 participates in (2E)-4-hydroxy-3-methylbut-2-enyl diphosphate binding. His131 contacts dimethylallyl diphosphate. His131 lines the isopentenyl diphosphate pocket. Catalysis depends on Glu133, which acts as the Proton donor. A (2E)-4-hydroxy-3-methylbut-2-enyl diphosphate-binding site is contributed by Thr170. Residue Cys198 coordinates [4Fe-4S] cluster. Residues Ser226, Asn228, and Ser271 each coordinate (2E)-4-hydroxy-3-methylbut-2-enyl diphosphate. Ser226, Asn228, and Ser271 together coordinate dimethylallyl diphosphate. The isopentenyl diphosphate site is built by Ser226, Asn228, and Ser271.

This sequence belongs to the IspH family. It depends on [4Fe-4S] cluster as a cofactor.

The catalysed reaction is isopentenyl diphosphate + 2 oxidized [2Fe-2S]-[ferredoxin] + H2O = (2E)-4-hydroxy-3-methylbut-2-enyl diphosphate + 2 reduced [2Fe-2S]-[ferredoxin] + 2 H(+). The enzyme catalyses dimethylallyl diphosphate + 2 oxidized [2Fe-2S]-[ferredoxin] + H2O = (2E)-4-hydroxy-3-methylbut-2-enyl diphosphate + 2 reduced [2Fe-2S]-[ferredoxin] + 2 H(+). The protein operates within isoprenoid biosynthesis; dimethylallyl diphosphate biosynthesis; dimethylallyl diphosphate from (2E)-4-hydroxy-3-methylbutenyl diphosphate: step 1/1. Its pathway is isoprenoid biosynthesis; isopentenyl diphosphate biosynthesis via DXP pathway; isopentenyl diphosphate from 1-deoxy-D-xylulose 5-phosphate: step 6/6. Catalyzes the conversion of 1-hydroxy-2-methyl-2-(E)-butenyl 4-diphosphate (HMBPP) into a mixture of isopentenyl diphosphate (IPP) and dimethylallyl diphosphate (DMAPP). Acts in the terminal step of the DOXP/MEP pathway for isoprenoid precursor biosynthesis. In Halalkalibacterium halodurans (strain ATCC BAA-125 / DSM 18197 / FERM 7344 / JCM 9153 / C-125) (Bacillus halodurans), this protein is 4-hydroxy-3-methylbut-2-enyl diphosphate reductase.